The sequence spans 92 residues: Small ribosomal subunit protein uS19 (92 aa).

The protein belongs to the universal ribosomal protein uS19 family.

Functionally, protein S19 forms a complex with S13 that binds strongly to the 16S ribosomal RNA. The chain is Small ribosomal subunit protein uS19 from Leptospira biflexa serovar Patoc (strain Patoc 1 / Ames).